Consider the following 310-residue polypeptide: Glucan endo-1,3-beta-glucosidase GI (310 aa).

The Proton donor role is filled by Glu-96. Glu-234 acts as the Nucleophile in catalysis.

Belongs to the glycosyl hydrolase 17 family. In terms of assembly, monomer. As to expression, young leaves and roots.

The enzyme catalyses Hydrolysis of (1-&gt;3)-beta-D-glucosidic linkages in (1-&gt;3)-beta-D-glucans.. May provide a degree of protection against microbial invasion of germinated barley grain through its ability to degrade fungal cell wall polysaccharides. Does not hydrolyze (1,3;1,4)-beta-D-glucans, (1,6)-beta-D-glucan, CM-cellulose, insoluble (1,3)-beta-D-glucans or aryl beta-D-glycosides. This Hordeum vulgare (Barley) protein is Glucan endo-1,3-beta-glucosidase GI.